Reading from the N-terminus, the 505-residue chain is Argininosuccinate lyase (505 aa).

It belongs to the lyase 1 family. Argininosuccinate lyase subfamily.

The protein resides in the cytoplasm. It carries out the reaction 2-(N(omega)-L-arginino)succinate = fumarate + L-arginine. Its pathway is amino-acid biosynthesis; L-arginine biosynthesis; L-arginine from L-ornithine and carbamoyl phosphate: step 3/3. This is Argininosuccinate lyase from Rhodococcoides fascians (Rhodococcus fascians).